The chain runs to 379 residues: D-threonine aldolase (379 aa).

Lys59 is modified (N6-(pyridoxal phosphate)lysine).

This sequence belongs to the DSD1 family. It depends on pyridoxal 5'-phosphate as a cofactor. Mn(2+) is required as a cofactor. The cofactor is Co(2+). Ni(2+) serves as cofactor. Requires Mg(2+) as cofactor.

It catalyses the reaction D-threonine = acetaldehyde + glycine. It carries out the reaction D-allo-threonine = acetaldehyde + glycine. Inhibited by the carbonyl reagents hydroxylamine, phenylhydrazine and semicarbazide. Inhibited by the chelating agent EDTA. Inhibited by the sulfhydryl reagent p-chloromercuribenzoic acid, and by sodium cyanide. Inhibited by iodoacetate, Ag(2)SO(4), HgCl(2) and CdCl(2). Competitively inhibited by beta-hydroxyaspartate and O-phospho-DL-threonine. Its function is as follows. Catalyzes the reversible cleavage of D-threonine or D-allothreonine into glycine and acetaldehyde. Can also cleave D-beta-phenylserine, D-beta-hydroxy-alpha-aminovaleric acid, D-beta-3,4-dihydroxyphenylserine and D-beta-3,4-methylenedioxyphenylserine into glycine and the corresponding aldehyde compounds. Inactive towards D-serine, beta-hydroxyaspartate and O-phospho-DL-threonine. This is D-threonine aldolase from Arthrobacter sp.